A 129-amino-acid polypeptide reads, in one-letter code: Small ribosomal subunit protein uS11 (129 aa).

This sequence belongs to the universal ribosomal protein uS11 family. Part of the 30S ribosomal subunit. Interacts with proteins S7 and S18. Binds to IF-3.

Functionally, located on the platform of the 30S subunit, it bridges several disparate RNA helices of the 16S rRNA. Forms part of the Shine-Dalgarno cleft in the 70S ribosome. This chain is Small ribosomal subunit protein uS11, found in Hyphomonas neptunium (strain ATCC 15444).